The following is a 306-amino-acid chain: MSNWLVDKLIPSIMRSEVKKSSVPEGLWHKCPSCEAVLYRPELEKTLDVCPKCNHHMRIGARARIDIFLDAEGRTELGADLEPVDRLKFRDGKKYKDRLVAAQKQTGEKDALVSMSGTLLGMPVVVSAFEFSFMGGSMGAIVGERFVRAANYALENRCPMVCFSASGGARMQEALISLMQMAKTSAVLARLREEGIPFISVLTDPVYGGVSASLAMLGDVIVGEPKALIGFAGPRVIEQTVREKLPEGFQRSEFLLEHGAIDLIIDRRELRPRLGNLLAQLTGKPTPKFVAAPIEPIVVPPVPANV.

One can recognise a CoA carboxyltransferase N-terminal domain in the interval 27-296; sequence LWHKCPSCEA…PKFVAAPIEP (270 aa). Zn(2+) is bound by residues C31, C34, C50, and C53. The C4-type zinc finger occupies 31-53; sequence CPSCEAVLYRPELEKTLDVCPKC.

It belongs to the AccD/PCCB family. Acetyl-CoA carboxylase is a heterohexamer composed of biotin carboxyl carrier protein (AccB), biotin carboxylase (AccC) and two subunits each of ACCase subunit alpha (AccA) and ACCase subunit beta (AccD). Requires Zn(2+) as cofactor.

It localises to the cytoplasm. The catalysed reaction is N(6)-carboxybiotinyl-L-lysyl-[protein] + acetyl-CoA = N(6)-biotinyl-L-lysyl-[protein] + malonyl-CoA. It participates in lipid metabolism; malonyl-CoA biosynthesis; malonyl-CoA from acetyl-CoA: step 1/1. Functionally, component of the acetyl coenzyme A carboxylase (ACC) complex. Biotin carboxylase (BC) catalyzes the carboxylation of biotin on its carrier protein (BCCP) and then the CO(2) group is transferred by the transcarboxylase to acetyl-CoA to form malonyl-CoA. The polypeptide is Acetyl-coenzyme A carboxylase carboxyl transferase subunit beta (Pseudomonas fluorescens (strain Pf0-1)).